Here is a 139-residue protein sequence, read N- to C-terminus: ATP synthase epsilon chain (139 aa).

The segment at 89–110 is disordered; the sequence is EARAEQARAEAEARRREAQSEH.

The protein belongs to the ATPase epsilon chain family. F-type ATPases have 2 components, CF(1) - the catalytic core - and CF(0) - the membrane proton channel. CF(1) has five subunits: alpha(3), beta(3), gamma(1), delta(1), epsilon(1). CF(0) has three main subunits: a, b and c.

The protein localises to the cell membrane. Its function is as follows. Produces ATP from ADP in the presence of a proton gradient across the membrane. This chain is ATP synthase epsilon chain, found in Chloroflexus aggregans (strain MD-66 / DSM 9485).